A 549-amino-acid chain; its full sequence is Neurofilament light polypeptide (549 aa).

The residue at position 2 (Ser-2) is an N-acetylserine. A head region spans residues 2–92 (SSFYSEPYYS…KSIRTQEKAQ (91 aa)). A glycan (O-linked (GlcNAc) threonine) is linked at Thr-21. Asymmetric dimethylarginine; alternate is present on Arg-23. Position 23 is an omega-N-methylarginine; alternate (Arg-23). O-linked (GlcNAc) serine glycosylation occurs at Ser-27. Residue Arg-30 is modified to Omega-N-methylarginine. Tyr-43 is modified (phosphotyrosine). Phosphoserine occurs at positions 56, 66, and 102. The IF rod domain maps to 89–400 (EKAQLQDLND…KLLEGEETRL (312 aa)). Positions 93–124 (LQDLNDRFASFIERVHELEQQNKVLEAQLLVL) are coil 1A. The tract at residues 125-137 (RQKHSEPSRFRAL) is linker 1. Residues 138 to 233 (YEQEIRDLRL…KVHEEEIAEL (96 aa)) are coil 1B. The segment at 234–252 (QAQIQYAQISVEMDVSSKP) is linker 12. The tract at residues 253–271 (DLSAALKDIRAQYEKLAAK) is coil 2A. The interval 272–280 (NMQNAEEWF) is linker 2. The interval 281-396 (KSRFTVLTES…AAYRKLLEGE (116 aa)) is coil 2B. Residues 381–391 (ALDIEIAAYRK) are epitope; recognized by IF-specific monoclonal antibody. Positions 397-443 (ETRLSFTSVGSLTTGYSQSSQVFGRSAYGGLQTSSYLMSTRSFPSYY) are tail, subdomain A. The tract at residues 397–549 (ETRLSFTSVG…GEEQATKKKD (153 aa)) is tail. The interval 444–549 (TSHVQEEQIE…GEEQATKKKD (106 aa)) is tail, subdomain B (acidic). The interval 462–549 (KAEEAKDEPP…GEEQATKKKD (88 aa)) is disordered. Residues 471–534 (PSEGEAEEEG…ETKEAEEEEK (64 aa)) show a composition bias toward acidic residues. Ser-472 is subject to Phosphoserine. Thr-526 is modified (phosphothreonine). The segment covering 535–549 (KDEGAGEEQATKKKD) has biased composition (basic and acidic residues).

This sequence belongs to the intermediate filament family. In terms of assembly, forms homodimers (in vitro). Forms heterodimers with NEFH or NEFM; which can further hetero-oligomerize (in vitro). Forms heterodimers with INA (in vitro). Interacts with ARHGEF28. Interacts with TRIM2. In terms of processing, O-glycosylated. Post-translationally, phosphorylated in the head and rod regions by the PKC kinase PKN1, leading to the inhibition of polymerization. Ubiquitinated in the presence of TRIM2 and UBE2D1.

The protein localises to the cell projection. The protein resides in the axon. It is found in the cytoplasm. It localises to the cytoskeleton. Functionally, neurofilaments usually contain three intermediate filament proteins: NEFL, NEFM, and NEFH which are involved in the maintenance of neuronal caliber. May additionally cooperate with the neuronal intermediate filament proteins PRPH and INA to form neuronal filamentous networks. The protein is Neurofilament light polypeptide (NEFL) of Sus scrofa (Pig).